We begin with the raw amino-acid sequence, 194 residues long: Endoribonuclease ToxN (194 aa).

The stretch at 114 to 182 (MLKQYLFLKE…DQAKERDKAR (69 aa)) forms a coiled coil. The segment covering 171 to 182 (ERDQAKERDKAR) has biased composition (basic and acidic residues). The segment at 171 to 194 (ERDQAKERDKARRIAYMRQMGRER) is disordered.

It belongs to the ToxN/AbiQ toxin family. In terms of assembly, one ToxN monomer binds to a 34-nt-long single repeat of the ToxI RNA; this complex forms a triangular heterohexameric complex with ToxN connected by the ToxI RNA to another toxin molecule. The ToxI repeats are cleavage products of their precursor. The ToxI repeat forms a pseudoknot which occludes the toxin active site.

In terms of biological role, toxic component of a type III toxin-antitoxin (TA) system. An endoribonuclease which cleaves between the first and second A of AAAAA sequences; it tolerates other nucleotides in positions +2 and +4 of the consensus. Digests cognate antitoxin RNA ToxI as shown by the 2'-3'-cyclic phosphate at the 3' end of the 34-nt repeats and probably other RNAs. Inhibits growth when expressed in E.coli without causing cell lysis; this bacteriostatic effect is neutralized by cognate RNA antitoxin ToxI, which has 2.9 nearly identical 34 nucleotide-long repeats. Non-cognate antitoxin RNA from P.atrosepticum does not inhibit this toxin. The toxin-antitoxin pair function in plasmid maintenance (a plasmid addiction system), but unlike its P.atrosepticum homolog it is not seen to confer resistance to bacteriophages. The sequence is that of Endoribonuclease ToxN from Bacillus thuringiensis subsp. kurstaki.